A 319-amino-acid polypeptide reads, in one-letter code: Ribonuclease Z (319 aa).

His-62, His-64, Asp-66, His-67, His-145, Asp-216, and His-274 together coordinate Zn(2+). Residue Asp-66 is the Proton acceptor of the active site.

This sequence belongs to the RNase Z family. In terms of assembly, homodimer. Requires Zn(2+) as cofactor.

It catalyses the reaction Endonucleolytic cleavage of RNA, removing extra 3' nucleotides from tRNA precursor, generating 3' termini of tRNAs. A 3'-hydroxy group is left at the tRNA terminus and a 5'-phosphoryl group is left at the trailer molecule.. Functionally, zinc phosphodiesterase, which displays some tRNA 3'-processing endonuclease activity. Probably involved in tRNA maturation, by removing a 3'-trailer from precursor tRNA. This chain is Ribonuclease Z, found in Synechococcus sp. (strain CC9605).